We begin with the raw amino-acid sequence, 471 residues long: Tigger transposable element-derived protein 3 (471 aa).

Residues 3–55 enclose the HTH psq-type domain; the sequence is LSSKKKLHALSLAEKIQVLELLDESKMSQSEVARRFQVSQPQISRICKNKEKL. DNA-binding regions (H-T-H motif) lie at residues 31-51 and 100-130; these read QSEV…ICKN and PMLL…WKRR. The 71-residue stretch at 67–137 folds into the HTH CENPB-type domain; the sequence is ERKRKRESKY…KRRNNVGFGA (71 aa). The 194-residue stretch at 167–360 folds into the DDE-1 domain; it reads FSPEDVFGCA…VPPQLIFSSF (194 aa).

The protein belongs to the tigger transposable element derived protein family.

The protein localises to the nucleus. The chain is Tigger transposable element-derived protein 3 (TIGD3) from Homo sapiens (Human).